Reading from the N-terminus, the 63-residue chain is Large ribosomal subunit protein eL24 (63 aa).

Residues cysteine 7, cysteine 10, cysteine 33, and cysteine 37 each coordinate Zn(2+). A C4-type zinc finger spans residues 7 to 37 (CSFCGGSIEPGTGLMYVLRNGQILWFCSSKC).

Belongs to the eukaryotic ribosomal protein eL24 family. As to quaternary structure, part of the 50S ribosomal subunit. Forms a cluster with proteins L3 and L14. Zn(2+) is required as a cofactor.

In terms of biological role, binds to the 23S rRNA. The sequence is that of Large ribosomal subunit protein eL24 from Aeropyrum pernix (strain ATCC 700893 / DSM 11879 / JCM 9820 / NBRC 100138 / K1).